Reading from the N-terminus, the 181-residue chain is MGFFDDKQDFLEETFAKYPPEGRRAAIMPLLRRVQQEEGWIRPERIEEIARLVGTTPTEVMGVASFYSYYQFVPTGKYHLQVCATLSCKLAGAEELWDYLTETLGIGPGEVTPDGLFSVQKVECLGSCHTAPVIQVNDEPYVECVTRARLEALLAGLRAGKRLEEIELPGKCGHHVHEVEV.

[2Fe-2S] cluster-binding residues include C83, S87, C88, C124, and C128. Residues C144 and C172 are joined by a disulfide bond.

Belongs to the complex I 24 kDa subunit family. As to quaternary structure, NDH-1 is composed of 15 different subunits, Nqo1 to Nqo15. The complex has a L-shaped structure, with the hydrophobic arm (subunits Nqo7, Nqo8 and Nqo10 to Nqo14) embedded in the membrane and the hydrophilic peripheral arm (subunits Nqo1 to Nqo6, Nqo9 and Nqo15) protruding into the bacterial cytoplasm. The hydrophilic domain contains all the redox centers. The cofactor is [2Fe-2S] cluster.

It localises to the cell membrane. It catalyses the reaction a quinone + NADH + 5 H(+)(in) = a quinol + NAD(+) + 4 H(+)(out). NDH-1 shuttles electrons from NADH, via FMN and iron-sulfur (Fe-S) centers, to quinones in the respiratory chain. The immediate electron acceptor for the enzyme in this species is menaquinone. Couples the redox reaction to proton translocation (for every two electrons transferred, four hydrogen ions are translocated across the cytoplasmic membrane), and thus conserves the redox energy in a proton gradient required for the synthesis of ATP. In Thermus thermophilus (strain ATCC 27634 / DSM 579 / HB8), this protein is NADH-quinone oxidoreductase subunit 2 (nqo2).